We begin with the raw amino-acid sequence, 1392 residues long: DNA-directed RNA polymerase subunit beta (1392 aa).

The protein belongs to the RNA polymerase beta chain family. In terms of assembly, the RNAP catalytic core consists of 2 alpha, 1 beta, 1 beta' and 1 omega subunit. When a sigma factor is associated with the core the holoenzyme is formed, which can initiate transcription.

The enzyme catalyses RNA(n) + a ribonucleoside 5'-triphosphate = RNA(n+1) + diphosphate. Functionally, DNA-dependent RNA polymerase catalyzes the transcription of DNA into RNA using the four ribonucleoside triphosphates as substrates. This chain is DNA-directed RNA polymerase subunit beta, found in Neisseria gonorrhoeae (strain NCCP11945).